The following is a 385-amino-acid chain: ATP phosphoribosyltransferase regulatory subunit (385 aa).

Belongs to the class-II aminoacyl-tRNA synthetase family. HisZ subfamily. Heteromultimer composed of HisG and HisZ subunits.

The protein resides in the cytoplasm. It participates in amino-acid biosynthesis; L-histidine biosynthesis; L-histidine from 5-phospho-alpha-D-ribose 1-diphosphate: step 1/9. Its function is as follows. Required for the first step of histidine biosynthesis. May allow the feedback regulation of ATP phosphoribosyltransferase activity by histidine. The protein is ATP phosphoribosyltransferase regulatory subunit of Bordetella pertussis (strain Tohama I / ATCC BAA-589 / NCTC 13251).